The sequence spans 556 residues: Arginine--tRNA ligase (556 aa).

The short motif at 132–142 (ANPTGNLHLGH) is the 'HIGH' region element.

This sequence belongs to the class-I aminoacyl-tRNA synthetase family. As to quaternary structure, monomer.

Its subcellular location is the cytoplasm. It catalyses the reaction tRNA(Arg) + L-arginine + ATP = L-arginyl-tRNA(Arg) + AMP + diphosphate. The sequence is that of Arginine--tRNA ligase from Bacillus licheniformis (strain ATCC 14580 / DSM 13 / JCM 2505 / CCUG 7422 / NBRC 12200 / NCIMB 9375 / NCTC 10341 / NRRL NRS-1264 / Gibson 46).